The following is an 880-amino-acid chain: Guanine nucleotide-binding protein subunit beta 2 (880 aa).

S24 bears the Phosphoserine mark. 3 Kelch repeats span residues 291 to 339 (NIYI…MVNN), 377 to 425 (HIFF…KIDI), and 501 to 552 (TVII…LTPS). The interval 624 to 649 (FNSGSAAQESPKAGASASSASAASFD) is disordered. Low complexity predominate over residues 638 to 647 (ASASSASAAS). A Kelch 4 repeat occupies 691–738 (TVVLHGGSNGLNVLDDMWLMDLECETWTPIETFAKADSSEDGDEKLDS).

In terms of assembly, g proteins are composed of 3 units, alpha, beta and gamma. GPB1 interacts with the alpha subunit GPA2.

The protein resides in the cytoplasm. It is found in the mitochondrion. Functionally, beta subunit of a guanine nucleotide-binding protein (G protein). G proteins are involved as modulators or transducers in various transmembrane signaling systems. The beta and gamma chains are required for the GTPase activity, for replacement of GDP by GTP, and for G protein-effector interaction. Involved in the determination of the cAMP level according to nutritional conditions, most probably as a regulator of cAMP phosphodiesterase. Required for the control of pseudohyphal and haploid invasive growth. In Saccharomyces cerevisiae (strain ATCC 204508 / S288c) (Baker's yeast), this protein is Guanine nucleotide-binding protein subunit beta 2 (GPB2).